A 208-amino-acid polypeptide reads, in one-letter code: Cytidylate kinase (208 aa).

7-15 serves as a coordination point for ATP; the sequence is GPAASGKGT.

It belongs to the cytidylate kinase family. Type 1 subfamily.

It is found in the cytoplasm. The catalysed reaction is CMP + ATP = CDP + ADP. It catalyses the reaction dCMP + ATP = dCDP + ADP. In Xanthobacter autotrophicus (strain ATCC BAA-1158 / Py2), this protein is Cytidylate kinase.